We begin with the raw amino-acid sequence, 312 residues long: Zinc finger protein 414 (312 aa).

Residues 1–110 form a disordered region; sequence MEEKPSGPIP…RRPPPGKQIP (110 aa). A compositionally biased stretch (low complexity) spans 29–48; that stretch reads SPAVPAAAPSSSMSEEPGPE. Positions 84 to 93 are enriched in polar residues; it reads GLTSIVSGTS. 3 C2H2-type zinc fingers span residues 109–133, 145–169, and 176–201; these read IPCSSPGCCLSFPSVRDLAQHLRTH, FRCSALSCTETFPSMQELVAHSKLH, and FKCENCLLRFRTHRSLFKHLHVCAEH. The tract at residues 203–312 is disordered; the sequence is QSPAPPPPPA…GSDAPSGACR (110 aa). Over residues 213–225 the composition is skewed to basic and acidic residues; the sequence is LDREPPAPERPPE. 2 stretches are compositionally biased toward low complexity: residues 227–243 and 265–285; these read DPASAPGLPFPLLEPFT and SPPRLRPFLAAAPGPPASSAA.

The protein belongs to the krueppel C2H2-type zinc-finger protein family.

It localises to the nucleus. In terms of biological role, may be involved in transcriptional regulation. This Homo sapiens (Human) protein is Zinc finger protein 414 (ZNF414).